We begin with the raw amino-acid sequence, 182 residues long: A-type ATP synthase subunit E (182 aa).

Belongs to the V-ATPase E subunit family. As to quaternary structure, has multiple subunits with at least A(3), B(3), C, D, E, F, H, I and proteolipid K(x).

It localises to the cell membrane. Functionally, component of the A-type ATP synthase that produces ATP from ADP in the presence of a proton gradient across the membrane. The sequence is that of A-type ATP synthase subunit E from Picrophilus torridus (strain ATCC 700027 / DSM 9790 / JCM 10055 / NBRC 100828 / KAW 2/3).